The following is a 207-amino-acid chain: RNA chaperone ProQ (207 aa).

The tract at residues 100 to 156 is disordered; that stretch reads TLAESKAKVQARRKEQAQKARDEEKSKPKTKKAPQQRRANKPQAQKPAKQPVETRAL. The segment covering 111–126 has biased composition (basic and acidic residues); the sequence is RRKEQAQKARDEEKSK. A compositionally biased stretch (basic residues) spans 127-139; it reads PKTKKAPQQRRAN.

Belongs to the ProQ family.

It is found in the cytoplasm. Its function is as follows. RNA chaperone with significant RNA binding, RNA strand exchange and RNA duplexing activities. The chain is RNA chaperone ProQ from Vibrio vulnificus (strain CMCP6).